We begin with the raw amino-acid sequence, 241 residues long: 3-deoxy-D-manno-octulosonic acid kinase (241 aa).

Residue D171 is part of the active site.

Belongs to the protein kinase superfamily. KdkA/RfaP family.

It localises to the cell inner membrane. It catalyses the reaction an alpha-Kdo-(2-&gt;6)-lipid IVA + ATP = a 4-O-phospho-alpha-Kdo-(2-&gt;6)-lipid IVA + ADP + H(+). Its pathway is bacterial outer membrane biogenesis; LPS core biosynthesis. Catalyzes the ATP-dependent phosphorylation of the 3-deoxy-D-manno-octulosonic acid (Kdo) residue in Kdo-lipid IV(A) at the 4-OH position. The polypeptide is 3-deoxy-D-manno-octulosonic acid kinase (Haemophilus influenzae (strain 86-028NP)).